A 342-amino-acid polypeptide reads, in one-letter code: Ferredoxin--NADP reductase (342 aa).

Residues C17, D36, Q44, Y49, I89, F124, D289, and T330 each contribute to the FAD site.

Belongs to the ferredoxin--NADP reductase type 2 family. Homodimer. The cofactor is FAD.

It carries out the reaction 2 reduced [2Fe-2S]-[ferredoxin] + NADP(+) + H(+) = 2 oxidized [2Fe-2S]-[ferredoxin] + NADPH. The protein is Ferredoxin--NADP reductase of Rhodopseudomonas palustris (strain BisB18).